A 188-amino-acid polypeptide reads, in one-letter code: ATP synthase subunit delta (188 aa).

Belongs to the ATPase delta chain family. As to quaternary structure, F-type ATPases have 2 components, F(1) - the catalytic core - and F(0) - the membrane proton channel. F(1) has five subunits: alpha(3), beta(3), gamma(1), delta(1), epsilon(1). F(0) has three main subunits: a(1), b(2) and c(10-14). The alpha and beta chains form an alternating ring which encloses part of the gamma chain. F(1) is attached to F(0) by a central stalk formed by the gamma and epsilon chains, while a peripheral stalk is formed by the delta and b chains.

The protein resides in the cell inner membrane. Its function is as follows. F(1)F(0) ATP synthase produces ATP from ADP in the presence of a proton or sodium gradient. F-type ATPases consist of two structural domains, F(1) containing the extramembraneous catalytic core and F(0) containing the membrane proton channel, linked together by a central stalk and a peripheral stalk. During catalysis, ATP synthesis in the catalytic domain of F(1) is coupled via a rotary mechanism of the central stalk subunits to proton translocation. In terms of biological role, this protein is part of the stalk that links CF(0) to CF(1). It either transmits conformational changes from CF(0) to CF(1) or is implicated in proton conduction. This chain is ATP synthase subunit delta, found in Paracoccus denitrificans (strain Pd 1222).